A 260-amino-acid chain; its full sequence is Phosphate import ATP-binding protein PstB 5 (260 aa).

The ABC transporter domain occupies 9-255 (IKVKDLSFYY…PLDSRTRDYV (247 aa)). 41–48 (GPSGCGKS) is an ATP binding site.

This sequence belongs to the ABC transporter superfamily. Phosphate importer (TC 3.A.1.7) family. In terms of assembly, the complex is composed of two ATP-binding proteins (PstB), two transmembrane proteins (PstC and PstA) and a solute-binding protein (PstS).

Its subcellular location is the cell inner membrane. It catalyses the reaction phosphate(out) + ATP + H2O = ADP + 2 phosphate(in) + H(+). Part of the ABC transporter complex PstSACB involved in phosphate import. Responsible for energy coupling to the transport system. This is Phosphate import ATP-binding protein PstB 5 from Trichormus variabilis (strain ATCC 29413 / PCC 7937) (Anabaena variabilis).